A 277-amino-acid polypeptide reads, in one-letter code: Protein CUSTOS (277 aa).

Disordered regions lie at residues 1 to 81 (MVAP…QTTP), 108 to 182 (TQQA…QRCR), and 238 to 277 (SVNGDPVLSGTKKKKKKKAKKAREASLCPPAECAAAEPKN). Over residues 9–18 (SDSESSSSDS) the composition is skewed to low complexity. S62 is modified (phosphoserine). A compositionally biased stretch (basic and acidic residues) spans 63–72 (RRREVNQHDE). T80 carries the post-translational modification Phosphothreonine. The stretch at 106–141 (KKTQQARLQQEAKEQQEAKEQQAAKEEQAAKKEEDG) forms a coiled coil. Residues 115 to 142 (QEAKEQQEAKEQQAAKEEQAAKKEEDGF) show a composition bias toward basic and acidic residues. 2 positions are modified to phosphoserine: S158 and S238. Residues 248–258 (TKKKKKKKAKK) are compositionally biased toward basic residues. Residues 249–256 (KKKKKKKA) carry the Nucleolar localization signal (NLS) motif. The span at 265–277 (CPPAECAAAEPKN) shows a compositional bias: low complexity.

This sequence belongs to the CUSTOS family.

Its subcellular location is the nucleus envelope. In terms of biological role, plays a role in the regulation of Wnt signaling pathway during early development. The polypeptide is Protein CUSTOS (Rattus norvegicus (Rat)).